Consider the following 188-residue polypeptide: UPF0398 protein SSP1297 (188 aa).

It belongs to the UPF0398 family.

The protein is UPF0398 protein SSP1297 of Staphylococcus saprophyticus subsp. saprophyticus (strain ATCC 15305 / DSM 20229 / NCIMB 8711 / NCTC 7292 / S-41).